A 119-amino-acid chain; its full sequence is MIRGIGVDIVKVDRINEKNVQKILSQKEKEIYDTFKGQKRKKEYAAGRFAVKESLIKCFKRFIPYSQITVLNKQSGEPYLDEESVKYLFEKFGGNGTIHISIAHEREFAVATAVVIDED.

Residues Asp8 and Glu53 each coordinate Mg(2+).

The protein belongs to the P-Pant transferase superfamily. AcpS family. Requires Mg(2+) as cofactor.

The protein localises to the cytoplasm. The enzyme catalyses apo-[ACP] + CoA = holo-[ACP] + adenosine 3',5'-bisphosphate + H(+). In terms of biological role, transfers the 4'-phosphopantetheine moiety from coenzyme A to a Ser of acyl-carrier-protein. In Petrotoga mobilis (strain DSM 10674 / SJ95), this protein is Holo-[acyl-carrier-protein] synthase.